We begin with the raw amino-acid sequence, 568 residues long: MNTEILGVVAQVALMVILAYPLGRYIAKVYKGEKTWSDFMAPIERVIYKVCGIDPKEEMNWKQFLKALLILNAFWFVWGMVLLVSQGWLPLNPDGNGPQTPDQAFNTCISFMVNCNLQHYSGESGLTYFTQLFVIMLFQFITAATGMAAMAGIMKSMAAKTTKTIGNFWHFLVVSCTRILLPLSLIVGFILILQGTPMGFDGKMKVTTLEGQEQMVSQGPAAAIVPIKQLGTNGGGYFGVNSSHPLENPTYLTNMVECWSILIIPMAMVLALGFYTRRKKLAYSIFGVMLFAFLVGVCINVSQEMGGNPRIDELGIAQDNGAMEGKEVRLGAGATALWSIVTTVTSNGSVNGMHDSTMPLSGMMEMLNMQINTWFGGVGVGWMNYYTFIIIAVFISGLMVGRTPEFLGKKVEAREMKIATIVALLHPFVILVFTAISSYIYVYHPDFVESEGGWLNNLGFHGLSEQLYEYTSCAANNGSGFEGLGDNTYFWNWTCGIVLILSRFLPIIGQVAIAGLLAQKKFIPESAGTLKTDTLTFGIMTFVVIFIVAALSFFPVHALSTIAEHLSL.

10 consecutive transmembrane segments (helical) span residues 3–23 (TEILGVVAQVALMVILAYPLG), 64–84 (FLKALLILNAFWFVWGMVLLV), 133–153 (FVIMLFQFITAATGMAAMAGI), 179–199 (ILLPLSLIVGFILILQGTPMG), 255–275 (MVECWSILIIPMAMVLALGFY), 281–301 (LAYSIFGVMLFAFLVGVCINV), 375–395 (FGGVGVGWMNYYTFIIIAVFI), 418–438 (IATIVALLHPFVILVFTAISS), 497–517 (IVLILSRFLPIIGQVAIAGLL), and 536–556 (TFGIMTFVVIFIVAALSFFPV).

Belongs to the KdpA family. As to quaternary structure, the system is composed of three essential subunits: KdpA, KdpB and KdpC.

It is found in the cell inner membrane. Functionally, part of the high-affinity ATP-driven potassium transport (or Kdp) system, which catalyzes the hydrolysis of ATP coupled with the electrogenic transport of potassium into the cytoplasm. This subunit binds the periplasmic potassium ions and delivers the ions to the membrane domain of KdpB through an intramembrane tunnel. This is Potassium-transporting ATPase potassium-binding subunit from Bacteroides thetaiotaomicron (strain ATCC 29148 / DSM 2079 / JCM 5827 / CCUG 10774 / NCTC 10582 / VPI-5482 / E50).